We begin with the raw amino-acid sequence, 132 residues long: Binder of sperm protein homolog 1 (132 aa).

Residues 1-17 (MGSLMLLFVETTRNSSA) form the signal peptide. 2 consecutive Fibronectin type-II domains span residues 40 to 84 (VTDG…FCSA) and 85 to 132 (EDFA…KYCE). 4 disulfides stabilise this stretch: cysteine 45-cysteine 69, cysteine 59-cysteine 82, cysteine 90-cysteine 116, and cysteine 104-cysteine 131. The N-linked (GlcNAc...) asparagine glycan is linked to asparagine 53.

This sequence belongs to the seminal plasma protein family. In terms of tissue distribution, expressed only in the epididymis.

Its subcellular location is the secreted. Binds sperm in vitro and promotes sperm capacitation. Specifically promotes capacitation induced by high density lipoproteins (HDLs). Also binds heparin, phospholipid liposomes, and weakly to gelatin. Does not bind chondroitin sulfate B. This Homo sapiens (Human) protein is Binder of sperm protein homolog 1 (BSPH1).